The following is a 289-amino-acid chain: ATP synthase gamma chain (289 aa).

Belongs to the ATPase gamma chain family. In terms of assembly, F-type ATPases have 2 components, CF(1) - the catalytic core - and CF(0) - the membrane proton channel. CF(1) has five subunits: alpha(3), beta(3), gamma(1), delta(1), epsilon(1). CF(0) has three main subunits: a, b and c.

It is found in the cell membrane. Produces ATP from ADP in the presence of a proton gradient across the membrane. The gamma chain is believed to be important in regulating ATPase activity and the flow of protons through the CF(0) complex. This is ATP synthase gamma chain from Mycoplasmopsis synoviae (strain 53) (Mycoplasma synoviae).